The sequence spans 275 residues: Putative pyruvate, phosphate dikinase regulatory protein (275 aa).

149–156 lines the ADP pocket; it reads GVSRTSKT.

It belongs to the pyruvate, phosphate/water dikinase regulatory protein family. PDRP subfamily.

It catalyses the reaction N(tele)-phospho-L-histidyl/L-threonyl-[pyruvate, phosphate dikinase] + ADP = N(tele)-phospho-L-histidyl/O-phospho-L-threonyl-[pyruvate, phosphate dikinase] + AMP + H(+). The enzyme catalyses N(tele)-phospho-L-histidyl/O-phospho-L-threonyl-[pyruvate, phosphate dikinase] + phosphate + H(+) = N(tele)-phospho-L-histidyl/L-threonyl-[pyruvate, phosphate dikinase] + diphosphate. In terms of biological role, bifunctional serine/threonine kinase and phosphorylase involved in the regulation of the pyruvate, phosphate dikinase (PPDK) by catalyzing its phosphorylation/dephosphorylation. In Levilactobacillus brevis (strain ATCC 367 / BCRC 12310 / CIP 105137 / JCM 1170 / LMG 11437 / NCIMB 947 / NCTC 947) (Lactobacillus brevis), this protein is Putative pyruvate, phosphate dikinase regulatory protein.